Here is a 229-residue protein sequence, read N- to C-terminus: Potassium/proton antiporter CemA (229 aa).

Transmembrane regions (helical) follow at residues 7–27 (FTPL…SLSF), 114–134 (LICF…LLIL), 154–174 (ILLL…ELMI), and 189–209 (IISG…KYWI).

The protein belongs to the CemA family.

The protein resides in the plastid. The protein localises to the chloroplast inner membrane. The catalysed reaction is K(+)(in) + H(+)(out) = K(+)(out) + H(+)(in). Contributes to K(+)/H(+) antiport activity by supporting proton efflux to control proton extrusion and homeostasis in chloroplasts in a light-dependent manner to modulate photosynthesis. Prevents excessive induction of non-photochemical quenching (NPQ) under continuous-light conditions. Indirectly promotes efficient inorganic carbon uptake into chloroplasts. This chain is Potassium/proton antiporter CemA, found in Gossypium barbadense (Sea Island cotton).